The primary structure comprises 341 residues: Anthranilate phosphoribosyltransferase (341 aa).

5-phospho-alpha-D-ribose 1-diphosphate-binding positions include Gly-79, 82–83 (GD), Thr-87, 89–92 (NIST), 107–115 (KHGNRAASS), and Ala-119. Residue Gly-79 participates in anthranilate binding. Residue Ser-91 coordinates Mg(2+). Asn-110 provides a ligand contact to anthranilate. Anthranilate is bound at residue Arg-165. Mg(2+) contacts are provided by Asp-224 and Glu-225.

This sequence belongs to the anthranilate phosphoribosyltransferase family. As to quaternary structure, homodimer. Mg(2+) serves as cofactor.

The enzyme catalyses N-(5-phospho-beta-D-ribosyl)anthranilate + diphosphate = 5-phospho-alpha-D-ribose 1-diphosphate + anthranilate. The protein operates within amino-acid biosynthesis; L-tryptophan biosynthesis; L-tryptophan from chorismate: step 2/5. Catalyzes the transfer of the phosphoribosyl group of 5-phosphorylribose-1-pyrophosphate (PRPP) to anthranilate to yield N-(5'-phosphoribosyl)-anthranilate (PRA). In Lacticaseibacillus casei (strain BL23) (Lactobacillus casei), this protein is Anthranilate phosphoribosyltransferase.